A 160-amino-acid polypeptide reads, in one-letter code: 6,7-dimethyl-8-ribityllumazine synthase (160 aa).

5-amino-6-(D-ribitylamino)uracil contacts are provided by residues phenylalanine 22, 57 to 59, and 81 to 83; these read AVE and AVI. Residue 86–87 participates in (2S)-2-hydroxy-3-oxobutyl phosphate binding; it reads GT. The active-site Proton donor is the histidine 89. Position 114 (phenylalanine 114) interacts with 5-amino-6-(D-ribitylamino)uracil. Arginine 128 is a (2S)-2-hydroxy-3-oxobutyl phosphate binding site.

The protein belongs to the DMRL synthase family. Forms an icosahedral capsid composed of 60 subunits, arranged as a dodecamer of pentamers.

The catalysed reaction is (2S)-2-hydroxy-3-oxobutyl phosphate + 5-amino-6-(D-ribitylamino)uracil = 6,7-dimethyl-8-(1-D-ribityl)lumazine + phosphate + 2 H2O + H(+). The protein operates within cofactor biosynthesis; riboflavin biosynthesis; riboflavin from 2-hydroxy-3-oxobutyl phosphate and 5-amino-6-(D-ribitylamino)uracil: step 1/2. In terms of biological role, catalyzes the formation of 6,7-dimethyl-8-ribityllumazine by condensation of 5-amino-6-(D-ribitylamino)uracil with 3,4-dihydroxy-2-butanone 4-phosphate. This is the penultimate step in the biosynthesis of riboflavin. This Shewanella sediminis (strain HAW-EB3) protein is 6,7-dimethyl-8-ribityllumazine synthase.